The following is a 204-amino-acid chain: Large ribosomal subunit protein uL4 (204 aa).

The segment at 44–76 is disordered; it reads RAGTHRTKGMGEISGTTKKPYRQKGTGSARQGS.

It belongs to the universal ribosomal protein uL4 family. Part of the 50S ribosomal subunit.

Its function is as follows. One of the primary rRNA binding proteins, this protein initially binds near the 5'-end of the 23S rRNA. It is important during the early stages of 50S assembly. It makes multiple contacts with different domains of the 23S rRNA in the assembled 50S subunit and ribosome. Forms part of the polypeptide exit tunnel. The protein is Large ribosomal subunit protein uL4 of Gluconobacter oxydans (strain 621H) (Gluconobacter suboxydans).